Reading from the N-terminus, the 880-residue chain is Protein translocase subunit SecA (880 aa).

Residues Gln-86, 104–108 (GEGKT), and Asp-511 contribute to the ATP site. The disordered stretch occupies residues 837–871 (AQKIQRSDGDGARRPVEKPKKIGRNDPCPCGSGKK). The span at 841 to 860 (QRSDGDGARRPVEKPKKIGR) shows a compositional bias: basic and acidic residues. Zn(2+) contacts are provided by Cys-864, Cys-866, Cys-875, and Cys-876.

It belongs to the SecA family. In terms of assembly, monomer and homodimer. Part of the essential Sec protein translocation apparatus which comprises SecA, SecYEG and auxiliary proteins SecDF. Other proteins may also be involved. Requires Zn(2+) as cofactor.

It is found in the cell inner membrane. The protein localises to the cytoplasm. It catalyses the reaction ATP + H2O + cellular proteinSide 1 = ADP + phosphate + cellular proteinSide 2.. Part of the Sec protein translocase complex. Interacts with the SecYEG preprotein conducting channel. Has a central role in coupling the hydrolysis of ATP to the transfer of proteins into and across the cell membrane, serving as an ATP-driven molecular motor driving the stepwise translocation of polypeptide chains across the membrane. The sequence is that of Protein translocase subunit SecA from Thermodesulfovibrio yellowstonii (strain ATCC 51303 / DSM 11347 / YP87).